An 85-amino-acid polypeptide reads, in one-letter code: Beta-toxin BmKAS (85 aa).

A signal peptide spans 1-19 (MKTVIFLIVSSLLLIGVKT). The LCN-type CS-alpha/beta domain maps to 20-82 (DNGYLLDKYT…LWNYNTNKCN (63 aa)). Disulfide bonds link cysteine 31–cysteine 81, cysteine 35–cysteine 56, cysteine 42–cysteine 63, and cysteine 46–cysteine 65.

Expressed by the venom gland.

It is found in the secreted. Functionally, beta toxins bind voltage-independently at site-4 of sodium channels (Nav) and shift the voltage of activation toward more negative potentials thereby affecting sodium channel activation and promoting spontaneous and repetitive firing. It binds to distinct receptor sites of mammal and insect voltage-gated sodium channels. It displays antinociceptive effect in rat models, which is due to its specific modulation of sodium channels of sensory neurons. It also significantly stimulates the binding of [3H]-ryanodine to ryanodine receptors on the sarcoplasmic reticulum of the skeletal muscle through an indirect mechanism. And it promotes noradrenaline release from the rat hippocampus slice. The polypeptide is Beta-toxin BmKAS (Olivierus martensii (Manchurian scorpion)).